The chain runs to 380 residues: Cytochrome b (380 aa).

4 helical membrane passes run 33–53 (LGSL…FLAM), 77–98 (WVIR…FLHI), 113–133 (WNIG…GYVL), and 178–198 (FFTF…LHLL). The heme b site is built by His-83 and His-97. Heme b is bound by residues His-182 and His-196. His-201 is an a ubiquinone binding site. 4 helical membrane passes run 226-246 (TKDI…VLFS), 288-308 (LGGV…PMLH), 320-340 (LSQL…WIGG), and 347-367 (FITI…ILVP).

The protein belongs to the cytochrome b family. The cytochrome bc1 complex contains 11 subunits: 3 respiratory subunits (MT-CYB, CYC1 and UQCRFS1), 2 core proteins (UQCRC1 and UQCRC2) and 6 low-molecular weight proteins (UQCRH/QCR6, UQCRB/QCR7, UQCRQ/QCR8, UQCR10/QCR9, UQCR11/QCR10 and a cleavage product of UQCRFS1). This cytochrome bc1 complex then forms a dimer. It depends on heme b as a cofactor.

The protein localises to the mitochondrion inner membrane. Component of the ubiquinol-cytochrome c reductase complex (complex III or cytochrome b-c1 complex) that is part of the mitochondrial respiratory chain. The b-c1 complex mediates electron transfer from ubiquinol to cytochrome c. Contributes to the generation of a proton gradient across the mitochondrial membrane that is then used for ATP synthesis. The protein is Cytochrome b (MT-CYB) of Nomascus leucogenys (Northern white-cheeked gibbon).